A 479-amino-acid chain; its full sequence is Ribulose bisphosphate carboxylase large chain (479 aa).

Positions 1 to 2 (MS) are excised as a propeptide. P3 bears the N-acetylproline mark. K14 bears the N6,N6,N6-trimethyllysine mark. Substrate-binding residues include N123 and T173. The active-site Proton acceptor is K175. Residue K177 coordinates substrate. Residues K201, D203, and E204 each coordinate Mg(2+). Residue K201 is modified to N6-carboxylysine. H294 (proton acceptor) is an active-site residue. R295, H327, and S379 together coordinate substrate.

It belongs to the RuBisCO large chain family. Type I subfamily. Heterohexadecamer of 8 large chains and 8 small chains; disulfide-linked. The disulfide link is formed within the large subunit homodimers. It depends on Mg(2+) as a cofactor. Post-translationally, the disulfide bond which can form in the large chain dimeric partners within the hexadecamer appears to be associated with oxidative stress and protein turnover.

It is found in the plastid. Its subcellular location is the chloroplast. The enzyme catalyses 2 (2R)-3-phosphoglycerate + 2 H(+) = D-ribulose 1,5-bisphosphate + CO2 + H2O. The catalysed reaction is D-ribulose 1,5-bisphosphate + O2 = 2-phosphoglycolate + (2R)-3-phosphoglycerate + 2 H(+). Functionally, ruBisCO catalyzes two reactions: the carboxylation of D-ribulose 1,5-bisphosphate, the primary event in carbon dioxide fixation, as well as the oxidative fragmentation of the pentose substrate in the photorespiration process. Both reactions occur simultaneously and in competition at the same active site. This Ananas comosus (Pineapple) protein is Ribulose bisphosphate carboxylase large chain.